A 598-amino-acid polypeptide reads, in one-letter code: Pantothenate kinase 1 (598 aa).

Positions 32 to 161 are disordered; that stretch reads ARPGDQGKAG…SPGAPVGTSA (130 aa). The span at 38–49 shows a compositional bias: gly residues; the sequence is GKAGGGSPGWGC. Ser215 bears the Phosphoserine mark. A Nucleolar localization signal motif is present at residues 218-235; that stretch reads KKCRLRRRMDSGRKNRPP. Residue Glu363 is the Proton acceptor of the active site. Residues Ser417, Ser420, and Arg432 each coordinate acetyl-CoA.

This sequence belongs to the type II pantothenate kinase family. Homodimer. As to expression, expressed at high levels in brain, heart, kidney, liver, skeletal muscle and testis. Detected at much lower levels in kidney, liver, brain and testis and not detected in heart or skeletal muscle.

It localises to the cytoplasm. It is found in the nucleus. The protein resides in the nucleolus. The protein localises to the cytosol. Its subcellular location is the cytoplasmic vesicle. It localises to the clathrin-coated vesicle. It is found in the recycling endosome. The catalysed reaction is (R)-pantothenate + ATP = (R)-4'-phosphopantothenate + ADP + H(+). It participates in cofactor biosynthesis; coenzyme A biosynthesis; CoA from (R)-pantothenate: step 1/5. Regulated by feedback inhibition by CoA and its thioesters. In terms of biological role, catalyzes the phosphorylation of pantothenate to generate 4'-phosphopantothenate in the first and rate-determining step of coenzyme A (CoA) synthesis. This chain is Pantothenate kinase 1 (PANK1), found in Homo sapiens (Human).